Consider the following 233-residue polypeptide: tRNA (guanine-N(7)-)-methyltransferase (233 aa).

The disordered stretch occupies residues 1–21; that stretch reads MTEESHPLRGAGNFFGRRHGK. Residues Glu64, Glu89, Asp116, and Asp138 each contribute to the S-adenosyl-L-methionine site. Asp138 is a catalytic residue. Residues Lys142, Asp174, and 212 to 215 contribute to the substrate site; that span reads TRYE.

This sequence belongs to the class I-like SAM-binding methyltransferase superfamily. TrmB family.

The enzyme catalyses guanosine(46) in tRNA + S-adenosyl-L-methionine = N(7)-methylguanosine(46) in tRNA + S-adenosyl-L-homocysteine. Its pathway is tRNA modification; N(7)-methylguanine-tRNA biosynthesis. Its function is as follows. Catalyzes the formation of N(7)-methylguanine at position 46 (m7G46) in tRNA. This is tRNA (guanine-N(7)-)-methyltransferase from Brucella anthropi (strain ATCC 49188 / DSM 6882 / CCUG 24695 / JCM 21032 / LMG 3331 / NBRC 15819 / NCTC 12168 / Alc 37) (Ochrobactrum anthropi).